A 784-amino-acid polypeptide reads, in one-letter code: PWWP domain-containing protein 2A (784 aa).

Disordered stretches follow at residues 1 to 32 (MAAV…LGRL), 244 to 272 (KPVE…PEDV), 463 to 567 (AKEK…EMQD), and 605 to 654 (SSSA…SSKE). A compositionally biased stretch (basic and acidic residues) spans 244 to 266 (KPVESIQEESKSFHEEPLVKSEE). A compositionally biased stretch (polar residues) spans 536–556 (TRYSATRSAGETPSEIQSPSN). Positions 605 to 614 (SSSASVCSSD) are enriched in low complexity. A PWWP domain is found at 684–744 (VGDIVWAKIY…LSQLTPFLEN (61 aa)).

It localises to the nucleus. Functionally, H2A.Z-specific chromatin binding protein which plays an important role in the neural crest cell differentiation and/or migration during early development and is essential for the development of the head and eye. Acts as an adapter between distinct nucleosome components (H3K36me3 or H2A.Z) and chromatin-modifying complexes, contributing to the regulation of the levels of histone acetylation at actively transcribed genes. The chain is PWWP domain-containing protein 2A (pwwp2a) from Xenopus tropicalis (Western clawed frog).